The chain runs to 300 residues: 4-diphosphocytidyl-2-C-methyl-D-erythritol kinase (300 aa).

Lys-17 is a catalytic residue. Pro-102–Ala-112 contacts ATP. Asp-144 is an active-site residue.

Belongs to the GHMP kinase family. IspE subfamily.

It catalyses the reaction 4-CDP-2-C-methyl-D-erythritol + ATP = 4-CDP-2-C-methyl-D-erythritol 2-phosphate + ADP + H(+). Its pathway is isoprenoid biosynthesis; isopentenyl diphosphate biosynthesis via DXP pathway; isopentenyl diphosphate from 1-deoxy-D-xylulose 5-phosphate: step 3/6. Its function is as follows. Catalyzes the phosphorylation of the position 2 hydroxy group of 4-diphosphocytidyl-2C-methyl-D-erythritol. The polypeptide is 4-diphosphocytidyl-2-C-methyl-D-erythritol kinase (Bradyrhizobium sp. (strain ORS 278)).